The following is a 160-amino-acid chain: Transcription elongation factor GreA (160 aa).

The stretch at 49 to 75 (SEYDEAKNDQAFTEGKILQLENKLKNA) forms a coiled coil.

This sequence belongs to the GreA/GreB family.

Necessary for efficient RNA polymerase transcription elongation past template-encoded arresting sites. The arresting sites in DNA have the property of trapping a certain fraction of elongating RNA polymerases that pass through, resulting in locked ternary complexes. Cleavage of the nascent transcript by cleavage factors such as GreA or GreB allows the resumption of elongation from the new 3'terminus. GreA releases sequences of 2 to 3 nucleotides. The chain is Transcription elongation factor GreA from Clostridium botulinum (strain Alaska E43 / Type E3).